We begin with the raw amino-acid sequence, 91 residues long: UPF0250 protein NGO_0791 (91 aa).

Belongs to the UPF0250 family.

The sequence is that of UPF0250 protein NGO_0791 from Neisseria gonorrhoeae (strain ATCC 700825 / FA 1090).